Reading from the N-terminus, the 231-residue chain is MCGNTMSVPLLTDAATVSGAERETAAVIFLHGLGDTGHSWADALSTIRLPHVKYICPHAPRIPVTLNMKMVMPSWFDLMGLSPDAPEDEAGIKKAAENIKALIEHEMKNGIPANRIVLGGFSQGGALSLYTALTCPHPLAGIVALSCWLPLHRAFPQAANGSAKDLAILQCHGELDPMVPVRFGALTAEKLRSVVTPARVQFKTYPGVMHSSCPQEMAAVKEFLEKLLPPV.

C2 carries the S-palmitoyl cysteine lipid modification. S82 bears the Phosphoserine mark. Active-site charge relay system residues include S122, D176, and H210.

This sequence belongs to the AB hydrolase superfamily. AB hydrolase 2 family. As to expression, expressed in various breast cancer cell lines.

The protein resides in the cytoplasm. It carries out the reaction S-hexadecanoyl-L-cysteinyl-[protein] + H2O = L-cysteinyl-[protein] + hexadecanoate + H(+). It catalyses the reaction prostaglandin E2 1-glyceryl ester + H2O = prostaglandin E2 + glycerol + H(+). The catalysed reaction is 1-hexadecanoyl-sn-glycero-3-phosphocholine + H2O = sn-glycerol 3-phosphocholine + hexadecanoate + H(+). The enzyme catalyses 1-octadecanoyl-sn-glycero-3-phosphocholine + H2O = octadecanoate + sn-glycerol 3-phosphocholine + H(+). It carries out the reaction 1-hexadecanoyl-sn-glycero-3-phosphate + H2O = sn-glycerol 3-phosphate + hexadecanoate + H(+). It catalyses the reaction 1-hexadecanoyl-sn-glycero-3-phospho-L-serine + H2O = sn-glycero-3-phospho-L-serine + hexadecanoate + H(+). Inhibited by compound 1 or (5,5-Dioxido-4H-thieno[3,2-c]thiochromen-2-yl)(4-(4-methoxyphenyl)piperazin-1-yl)methanone. Its function is as follows. Acts as an acyl-protein thioesterase hydrolyzing fatty acids from S-acylated cysteine residues in proteins such as trimeric G alpha proteins, GSDMD, GAP43, ZDHHC6 or HRAS. Deacylates GAP43. Mediates depalmitoylation of ZDHHC6. Has lysophospholipase activity. Hydrolyzes prostaglandin glycerol esters (PG-Gs) in the following order prostaglandin D2-glycerol ester (PGD2-G) &gt; prostaglandin E2 glycerol ester (PGE2-G) &gt; prostaglandin F2-alpha-glycerol ester (PGF2-alpha-G). Hydrolyzes 1-arachidonoylglycerol but not 2-arachidonoylglycerol or arachidonoylethanolamide. The protein is Acyl-protein thioesterase 2 (LYPLA2) of Homo sapiens (Human).